Here is a 453-residue protein sequence, read N- to C-terminus: Pre-mRNA-splicing factor prp46 (453 aa).

The span at 62-71 shows a compositional bias: low complexity; sequence EKQAKAAAAG. Residues 62–129 are disordered; that stretch reads EKQAKAAAAG…PSATRQQRPD (68 aa). WD repeat units lie at residues 142–181, 184–223, 226–265, 268–309, 311–350, 351–389, and 400–439; these read GHLG…LRLT, GHIS…VIRH, GHLS…NIHV, GHKG…GVLT, HKKG…QNFE, GHNA…KFQS, and DAEA…TPES. The disordered stretch occupies residues 432 to 453; sequence DDEATPESHPVTWAPTLGRQRY.

The protein belongs to the WD repeat PRL1/PRL2 family. Associated with the spliceosome.

The protein resides in the cytoplasm. The protein localises to the nucleus. Functionally, involved in pre-mRNA splicing and required for cell cycle progression at G2/M. In Aspergillus fumigatus (strain ATCC MYA-4609 / CBS 101355 / FGSC A1100 / Af293) (Neosartorya fumigata), this protein is Pre-mRNA-splicing factor prp46 (prp46).